We begin with the raw amino-acid sequence, 273 residues long: DnaJ homolog subfamily C member 27 (273 aa).

GTP-binding positions include 23–30 (GNAEVGKS), 71–75 (DMAGH), and 134–137 (NKVD). Residues 217–273 (DSWDMLGVKPGATREEVNKAYRKLAVLLHPDKCVAPGSEDAFKAVVNARTSLLKNIK) enclose the J domain.

It belongs to the small GTPase superfamily. Rab family.

The protein resides in the nucleus. GTPase possibly involved in regulation of the MEK/ERK pathway. The sequence is that of DnaJ homolog subfamily C member 27 (dnajc27) from Danio rerio (Zebrafish).